A 382-amino-acid polypeptide reads, in one-letter code: Cytochrome b (382 aa).

4 helical membrane-spanning segments follow: residues 28–48 (YGFL…FLAS), 72–94 (WCFR…LHIL), 107–127 (SWIS…IGYV), and 169–189 (FFVL…IHIF). Positions 78 and 92 each coordinate heme b. Residues His-173 and His-187 each coordinate heme b. Position 192 (His-192) interacts with a ubiquinone. A run of 4 helical transmembrane segments spans residues 214 to 234 (LLSL…LQSI), 274 to 294 (IPSK…LFLL), 317 to 337 (VPMI…CQLP), and 340 to 360 (IFIL…LFAL).

This sequence belongs to the cytochrome b family. In terms of assembly, the main subunits of complex b-c1 are: cytochrome b, cytochrome c1 and the Rieske protein. Requires heme b as cofactor.

It is found in the mitochondrion inner membrane. Its function is as follows. Component of the ubiquinol-cytochrome c reductase complex (complex III or cytochrome b-c1 complex) that is part of the mitochondrial respiratory chain. The b-c1 complex mediates electron transfer from ubiquinol to cytochrome c. Contributes to the generation of a proton gradient across the mitochondrial membrane that is then used for ATP synthesis. The chain is Cytochrome b (MT-CYB) from Plasmodium vivax (strain Salvador I).